A 268-amino-acid polypeptide reads, in one-letter code: CCAAT/enhancer-binding protein delta (268 aa).

3 disordered regions span residues 1-50 (MSAA…STTP), 98-132 (LELL…DAPG), and 152-223 (AAQP…QQKL). Serine 2 is subject to N-acetylserine. Residue lysine 120 forms a Glycyl lysine isopeptide (Lys-Gly) (interchain with G-Cter in SUMO) linkage. Positions 155–173 (PTPPTSPEPPRGSPGPSLA) are enriched in pro residues. Basic and acidic residues predominate over residues 177 to 201 (VREKGAGKRGPDRGSPEYRQRRERN). The region spanning 191 to 254 (SPEYRQRRER…ASLRQFFKEL (64 aa)) is the bZIP domain. Positions 195-222 (RQRRERNNIAVRKSRDKAKRRNQEMQQK) are basic motif. A leucine-zipper region spans residues 226 to 254 (LSAENEKLHQRVEQLTRDLASLRQFFKEL).

This sequence belongs to the bZIP family. C/EBP subfamily. As to quaternary structure, binds DNA as a homodimer and as a heterodimer. Can form stable heterodimers with CEBPA, CEBPB and CEBPE. Directly interacts with SPI1/PU.1; this interaction does not affect DNA-binding properties of each partner. Interacts with PRDM16. Ubiquitously expressed.

The protein resides in the nucleus. Its function is as follows. Transcription activator that recognizes two different DNA motifs: the CCAAT homology common to many promoters and the enhanced core homology common to many enhancers. Important transcription factor regulating the expression of genes involved in immune and inflammatory responses. Transcriptional activator that enhances IL6 transcription alone and as heterodimer with CEBPB. The protein is CCAAT/enhancer-binding protein delta (Cebpd) of Rattus norvegicus (Rat).